The primary structure comprises 351 residues: UDP-3-O-acylglucosamine N-acyltransferase (351 aa).

His240 serves as the catalytic Proton acceptor.

The protein belongs to the transferase hexapeptide repeat family. LpxD subfamily. Homotrimer.

The catalysed reaction is a UDP-3-O-[(3R)-3-hydroxyacyl]-alpha-D-glucosamine + a (3R)-hydroxyacyl-[ACP] = a UDP-2-N,3-O-bis[(3R)-3-hydroxyacyl]-alpha-D-glucosamine + holo-[ACP] + H(+). It functions in the pathway bacterial outer membrane biogenesis; LPS lipid A biosynthesis. In terms of biological role, catalyzes the N-acylation of UDP-3-O-acylglucosamine using 3-hydroxyacyl-ACP as the acyl donor. Is involved in the biosynthesis of lipid A, a phosphorylated glycolipid that anchors the lipopolysaccharide to the outer membrane of the cell. The chain is UDP-3-O-acylglucosamine N-acyltransferase from Pseudomonas syringae pv. tomato (strain ATCC BAA-871 / DC3000).